Here is a 427-residue protein sequence, read N- to C-terminus: Adenylosuccinate synthetase (427 aa).

GTP is bound by residues 12–18 (GDEGKGK) and 40–42 (GHT). Residue Asp-13 is the Proton acceptor of the active site. Mg(2+) contacts are provided by Asp-13 and Gly-40. Residues 13-16 (DEGK), 38-41 (NAGH), Thr-128, Arg-142, Gln-223, Thr-238, and Arg-302 contribute to the IMP site. The Proton donor role is filled by His-41. 298–304 (VTTGRDR) lines the substrate pocket. Residues Arg-304, 330-332 (KLD), and 412-414 (GVG) contribute to the GTP site.

It belongs to the adenylosuccinate synthetase family. In terms of assembly, homodimer. Mg(2+) is required as a cofactor.

It localises to the cytoplasm. It carries out the reaction IMP + L-aspartate + GTP = N(6)-(1,2-dicarboxyethyl)-AMP + GDP + phosphate + 2 H(+). The protein operates within purine metabolism; AMP biosynthesis via de novo pathway; AMP from IMP: step 1/2. Functionally, plays an important role in the de novo pathway of purine nucleotide biosynthesis. Catalyzes the first committed step in the biosynthesis of AMP from IMP. The sequence is that of Adenylosuccinate synthetase from Streptomyces coelicolor (strain ATCC BAA-471 / A3(2) / M145).